The chain runs to 269 residues: SF-assemblin (269 aa).

The segment at 1–23 is disordered; that stretch reads MSISPGRSFSPMRASGLTGITSA. A nonhelical region region spans residues 1–24; it reads MSISPGRSFSPMRASGLTGITSAG. The segment at 25–269 is rod; sequence PTAKLEHVSE…LQEGLKLVST (245 aa). Positions 98–144 form a coiled coil; that stretch reads AERSAAQHVDMQNSLKQAVDSLSNRLQDLHSLVREEREQRRNDIEHL.

This sequence belongs to the SF-assemblin family.

It is found in the cytoplasm. Its subcellular location is the cytoskeleton. Functionally, major component of the striated microtubule-associated fibers (SMAFs; system-I-fibers). The protein is SF-assemblin of Chlamydomonas moewusii (Chlamydomonas eugametos).